The chain runs to 255 residues: Hydroxyacylglutathione hydrolase (255 aa).

Zn(2+)-binding residues include H56, H58, D60, H61, H114, D133, and H171.

It belongs to the metallo-beta-lactamase superfamily. Glyoxalase II family. As to quaternary structure, monomer. Requires Zn(2+) as cofactor.

The enzyme catalyses an S-(2-hydroxyacyl)glutathione + H2O = a 2-hydroxy carboxylate + glutathione + H(+). Its pathway is secondary metabolite metabolism; methylglyoxal degradation; (R)-lactate from methylglyoxal: step 2/2. Its function is as follows. Thiolesterase that catalyzes the hydrolysis of S-D-lactoyl-glutathione to form glutathione and D-lactic acid. This chain is Hydroxyacylglutathione hydrolase, found in Bradyrhizobium sp. (strain ORS 278).